The primary structure comprises 179 residues: Serglycin (179 aa).

A signal peptide spans 1-26 (MRQVPVGTRLVLALAFVLVWGSSVQG). Residues 27-75 (YPARRARYQWVRCKPDGIFANCIEEKGPRFDLIAEESNVGPPMTDPVLM) constitute a propeptide, activation peptide. An intrachain disulfide couples Cys39 to Cys48. The tract at residues 86-145 (SDDYSGSGSGSGSGSGSGSGSGSGSGSGSGSGSGSGSGSGSGSGSGSGSGSGSLADMEWE) is disordered. O-linked (Xyl...) (glycosaminoglycan) serine glycosylation is found at Ser90 and Ser92. 24 tandem repeats follow at residues 90–91 (SG), 92–93 (SG), 94–95 (SG), 96–97 (SG), 98–99 (SG), 100–101 (SG), 102–103 (SG), 104–105 (SG), 106–107 (SG), 108–109 (SG), 110–111 (SG), 112–113 (SG), 114–115 (SG), 116–117 (SG), 118–119 (SG), 120–121 (SG), 122–123 (SG), 124–125 (SG), 126–127 (SG), 128–129 (SG), 130–131 (SG), 132–133 (SG), 134–135 (SG), and 136–137 (SG). Residues 90–137 (SGSGSGSGSGSGSGSGSGSGSGSGSGSGSGSGSGSGSGSGSGSGSGSG) are 24 X 2 AA tandem repeats of S-G. The span at 92 to 136 (SGSGSGSGSGSGSGSGSGSGSGSGSGSGSGSGSGSGSGSGSGSGS) shows a compositional bias: gly residues. O-linked (Xyl...) (glycosaminoglycan) serine glycosylation is found at Ser96, Ser98, Ser100, Ser102, Ser104, and Ser106.

It belongs to the serglycin family. As to quaternary structure, binds to activated CD44 and to GZMB. Post-translationally, O-glycosylated; contains chondroitin sulfate and heparan sulfate.

The protein localises to the cytoplasmic granule. The protein resides in the cytolytic granule. It localises to the secreted. It is found in the extracellular space. Its subcellular location is the golgi apparatus. Its function is as follows. Plays a role in formation of mast cell secretory granules and mediates storage of various compounds in secretory vesicles. Required for storage of some proteases in both connective tissue and mucosal mast cells and for storage of granzyme B in T-lymphocytes. Plays a role in localizing neutrophil elastase in azurophil granules of neutrophils. Mediates processing of MMP2. Plays a role in cytotoxic cell granule-mediated apoptosis by forming a complex with granzyme B which is delivered to cells by perforin to induce apoptosis. Regulates the secretion of TNF-alpha and may also regulate protease secretion. Inhibits bone mineralization. This chain is Serglycin (Srgn), found in Rattus norvegicus (Rat).